A 293-amino-acid polypeptide reads, in one-letter code: Protease HtpX (293 aa).

Transmembrane regions (helical) follow at residues 4-24 (IALFLLTNLGVMVVFGLILSL) and 32-52 (VMGLMIMAGLFGFGGAFVSLL). A Zn(2+)-binding site is contributed by histidine 139. Glutamate 140 is a catalytic residue. Histidine 143 contributes to the Zn(2+) binding site. Transmembrane regions (helical) follow at residues 158-178 (IVNTFVIFISRILAQLAAGFM) and 193-213 (MVYFVVSMVLELVFGIVASTI). Glutamate 222 contributes to the Zn(2+) binding site.

This sequence belongs to the peptidase M48B family. Zn(2+) serves as cofactor.

Its subcellular location is the cell inner membrane. The polypeptide is Protease HtpX (Erwinia tasmaniensis (strain DSM 17950 / CFBP 7177 / CIP 109463 / NCPPB 4357 / Et1/99)).